The following is a 1224-amino-acid chain: Coatomer subunit alpha (1224 aa).

WD repeat units follow at residues 3–38 (TKFE…LWDY), 42–80 (TLID…VWNY), 84–122 (RCLF…VWNW), and 126–164 (TCVC…VWDI). At Ser173 the chain carries Phosphoserine. The residue at position 185 (Thr185) is a Phosphothreonine. 3 WD repeats span residues 195 to 234 (AVVK…IWRM), 241 to 278 (EVDT…VWDM), and 282 to 319 (TGVQ…VFKL). Residue Ser402 is modified to Phosphoserine. The residue at position 591 (Thr591) is a Phosphothreonine. A Phosphoserine modification is found at Ser895. At Arg965 the chain carries Omega-N-methylarginine. The residue at position 1193 (Ser1193) is a Phosphoserine.

In terms of assembly, oligomeric complex that consists of at least the alpha, beta, beta', gamma, delta, epsilon and zeta subunits. Interacts with SCYL1. Interacts with JAGN1. Interacts with TMEM41B. Interacts with SVEP1. Probably interacts with PEX11A. In terms of tissue distribution, uniformly expressed in a wide range of adult and fetal tissues. Xenin is found in gastric, duodenal and jejunal mucosa. Circulates in the blood. Seems to be confined to specific endocrine cells.

It is found in the cytoplasm. The protein resides in the golgi apparatus membrane. The protein localises to the cytoplasmic vesicle. It localises to the COPI-coated vesicle membrane. Its subcellular location is the secreted. The coatomer is a cytosolic protein complex that binds to dilysine motifs and reversibly associates with Golgi non-clathrin-coated vesicles, which further mediate biosynthetic protein transport from the ER, via the Golgi up to the trans Golgi network. Coatomer complex is required for budding from Golgi membranes, and is essential for the retrograde Golgi-to-ER transport of dilysine-tagged proteins. In mammals, the coatomer can only be recruited by membranes associated to ADP-ribosylation factors (ARFs), which are small GTP-binding proteins; the complex also influences the Golgi structural integrity, as well as the processing, activity, and endocytic recycling of LDL receptors. Functionally, xenin stimulates exocrine pancreatic secretion. It inhibits pentagastrin-stimulated secretion of acid, to induce exocrine pancreatic secretion and to affect small and large intestinal motility. In the gut, xenin interacts with the neurotensin receptor. The polypeptide is Coatomer subunit alpha (COPA) (Homo sapiens (Human)).